Consider the following 417-residue polypeptide: MSLSNKLAITDVDLKDKRVLIRVDFNVPLDADKKITNNQRIVGALPTIKYAIENGAKAVVLMSHLGRPDGKANPKYSLKPVATELEKLLSKSVIFAENCVGKETEEIVNKATGGQIILLENLRFHAEEEGSSKDAEGKKVKADKEKVEEFRKGLTALGDVYINDAFGTAHRAHSSMVGVDLPQKASGFLVKKELEYFAKALESPQRPFLAILGGAKVSDKIQLIDNLLPKVNSLIITGAMAFTFKKTLENVKIGNSLFDEAGSKIVGDIVEKAKKNNVKIVLPVDYVTADKFAADAKTGYATDADGIPDGYMGLDVGEKSVELYKKTIAEAKTILWNGPPGVFELEPFANATKKTLDAAVAAAQSGSIVIIGGGDTATVAAKYGAEAKLSHVSTGGGASLELLEGKVLPGVDALSSK.

(2R)-3-phosphoglycerate contacts are provided by V23, D24, F25, N26, Q39, R40, S63, H64, G66, R67, L122, R123, H170, and R171. G214 serves as a coordination point for ADP. G214 lines the CDP pocket. AMP contacts are provided by A215 and K216. A215 provides a ligand contact to ATP. Mg(2+) is bound at residue A215. D219 provides a ligand contact to CDP. D219 contacts Mg(2+). K220 is a binding site for AMP. K220 is an ATP binding site. Position 238 (G238) interacts with ADP. G238 contributes to the CDP binding site. Residues A239 and G313 each coordinate AMP. A239 and G313 together coordinate ATP. Positions 338 and 343 each coordinate CDP. An ADP-binding site is contributed by F343. AMP is bound at residue E344. Residues E344, D375, and T376 each contribute to the ATP site. D375 is a Mg(2+) binding site.

Belongs to the phosphoglycerate kinase family. As to quaternary structure, monomer. Mg(2+) serves as cofactor.

It is found in the cytoplasm. Its subcellular location is the mitochondrion. It catalyses the reaction (2R)-3-phosphoglycerate + ATP = (2R)-3-phospho-glyceroyl phosphate + ADP. It participates in carbohydrate degradation; glycolysis; pyruvate from D-glyceraldehyde 3-phosphate: step 2/5. In terms of biological role, catalyzes one of the two ATP producing reactions in the glycolytic pathway via the reversible conversion of 1,3-diphosphoglycerate to 3-phosphoglycerate. Both L- and D- forms of purine and pyrimidine nucleotides can be used as substrates, but the activity is much lower on pyrimidines. Negatively regulates the biosynthesis of acetyl-CoA from pyruvate in the mitochondrion. The protein is Phosphoglycerate kinase (pgkA) of Aspergillus oryzae (strain ATCC 42149 / RIB 40) (Yellow koji mold).